The sequence spans 223 residues: Na(+)-translocating NADH-quinone reductase subunit D (223 aa).

5 helical membrane passes run 42-62 (TVMA…ISMI), 66-86 (IPSS…VIVV), 103-123 (VFVG…AFAM), 131-151 (FFDG…LGFI), and 178-198 (NGLL…IWAL).

Belongs to the NqrDE/RnfAE family. Composed of six subunits; NqrA, NqrB, NqrC, NqrD, NqrE and NqrF.

It localises to the cell inner membrane. The enzyme catalyses a ubiquinone + n Na(+)(in) + NADH + H(+) = a ubiquinol + n Na(+)(out) + NAD(+). In terms of biological role, NQR complex catalyzes the reduction of ubiquinone-1 to ubiquinol by two successive reactions, coupled with the transport of Na(+) ions from the cytoplasm to the periplasm. NqrA to NqrE are probably involved in the second step, the conversion of ubisemiquinone to ubiquinol. The chain is Na(+)-translocating NADH-quinone reductase subunit D from Pseudomonas paraeruginosa (strain DSM 24068 / PA7) (Pseudomonas aeruginosa (strain PA7)).